Here is a 99-residue protein sequence, read N- to C-terminus: MKFFVITLIVLLGLLQYRLWSGDNSLPEYFVLQKQIAAQQDGNAKLNERNQVLKEEIIDLKSGTEAIEERARNELGMVKEGETFYRVVGGDRAVSSPSQ.

Topologically, residues methionine 1–phenylalanine 3 are cytoplasmic. Residues phenylalanine 4 to serine 21 form a helical membrane-spanning segment. Over glycine 22–glutamine 99 the chain is Periplasmic. Residues valine 31–asparagine 73 are a coiled coil.

It belongs to the FtsB family. As to quaternary structure, part of a complex composed of FtsB, FtsL and FtsQ.

It localises to the cell inner membrane. Functionally, essential cell division protein. May link together the upstream cell division proteins, which are predominantly cytoplasmic, with the downstream cell division proteins, which are predominantly periplasmic. In Shewanella oneidensis (strain ATCC 700550 / JCM 31522 / CIP 106686 / LMG 19005 / NCIMB 14063 / MR-1), this protein is Cell division protein FtsB.